Reading from the N-terminus, the 229-residue chain is NAD(P)H-hydrate epimerase (229 aa).

The YjeF N-terminal domain occupies 10–217 (AINVDLELFN…ALQRKYELNL (208 aa)). Residue 60 to 64 (NNGGD) coordinates (6S)-NADPHX. K(+)-binding residues include N61 and D125. (6S)-NADPHX contacts are provided by residues 129–135 (GFSFKPP) and D158. Residue S161 coordinates K(+).

Belongs to the NnrE/AIBP family. K(+) is required as a cofactor.

The catalysed reaction is (6R)-NADHX = (6S)-NADHX. It catalyses the reaction (6R)-NADPHX = (6S)-NADPHX. Functionally, catalyzes the epimerization of the S- and R-forms of NAD(P)HX, a damaged form of NAD(P)H that is a result of enzymatic or heat-dependent hydration. This is a prerequisite for the S-specific NAD(P)H-hydrate dehydratase to allow the repair of both epimers of NAD(P)HX. This Drosophila virilis (Fruit fly) protein is NAD(P)H-hydrate epimerase.